Here is a 107-residue protein sequence, read N- to C-terminus: MHYLYLFISIATEIIGTSFLKTSEGFTKLWPTLGTLLSFGICFYFLSLTIKFLPLNITYATWAGLGLVLTTIISVIVFKENVNLISIISIGLIVIGVVLLNVFGESH.

4 helical membrane passes run 1 to 21, 26 to 46, 57 to 77, and 84 to 104; these read MHYL…SFLK, FTKL…FYFL, ITYA…SVIV, and LISI…NVFG.

The protein belongs to the drug/metabolite transporter (DMT) superfamily. Small multidrug resistance (SMR) (TC 2.A.7.1) family.

It localises to the cell membrane. Its function is as follows. Multidrug exporter. Is implicated for the resistance to bacteriocidal quaternary ammonium compounds. The sequence is that of Quaternary ammonium compound-resistance protein QacG (qacG) from Staphylococcus sp. (strain ST94).